Consider the following 404-residue polypeptide: Phosphoglycerate kinase (404 aa).

Substrate-binding positions include 22 to 24, arginine 37, 60 to 63, arginine 119, and arginine 156; these read DLN and HLGR. ATP contacts are provided by residues lysine 206, glycine 302, glutamate 333, and 359–362; that span reads GGDS.

The protein belongs to the phosphoglycerate kinase family. In terms of assembly, monomer.

The protein resides in the cytoplasm. The catalysed reaction is (2R)-3-phosphoglycerate + ATP = (2R)-3-phospho-glyceroyl phosphate + ADP. Its pathway is carbohydrate degradation; glycolysis; pyruvate from D-glyceraldehyde 3-phosphate: step 2/5. The sequence is that of Phosphoglycerate kinase from Clavibacter michiganensis subsp. michiganensis (strain NCPPB 382).